The primary structure comprises 298 residues: ATP phosphoribosyltransferase (298 aa).

This sequence belongs to the ATP phosphoribosyltransferase family. Long subfamily. Mg(2+) is required as a cofactor.

It is found in the cytoplasm. The catalysed reaction is 1-(5-phospho-beta-D-ribosyl)-ATP + diphosphate = 5-phospho-alpha-D-ribose 1-diphosphate + ATP. It functions in the pathway amino-acid biosynthesis; L-histidine biosynthesis; L-histidine from 5-phospho-alpha-D-ribose 1-diphosphate: step 1/9. Its activity is regulated as follows. Feedback inhibited by histidine. Functionally, catalyzes the condensation of ATP and 5-phosphoribose 1-diphosphate to form N'-(5'-phosphoribosyl)-ATP (PR-ATP). Has a crucial role in the pathway because the rate of histidine biosynthesis seems to be controlled primarily by regulation of HisG enzymatic activity. The chain is ATP phosphoribosyltransferase from Vibrio parahaemolyticus serotype O3:K6 (strain RIMD 2210633).